A 338-amino-acid chain; its full sequence is S-adenosylmethionine:tRNA ribosyltransferase-isomerase (338 aa).

The protein belongs to the QueA family. In terms of assembly, monomer.

Its subcellular location is the cytoplasm. The enzyme catalyses 7-aminomethyl-7-carbaguanosine(34) in tRNA + S-adenosyl-L-methionine = epoxyqueuosine(34) in tRNA + adenine + L-methionine + 2 H(+). It functions in the pathway tRNA modification; tRNA-queuosine biosynthesis. In terms of biological role, transfers and isomerizes the ribose moiety from AdoMet to the 7-aminomethyl group of 7-deazaguanine (preQ1-tRNA) to give epoxyqueuosine (oQ-tRNA). The sequence is that of S-adenosylmethionine:tRNA ribosyltransferase-isomerase from Carboxydothermus hydrogenoformans (strain ATCC BAA-161 / DSM 6008 / Z-2901).